Consider the following 159-residue polypeptide: Type IV major alpha-pilin (159 aa).

The propeptide at 1–6 (MNAQKG) is leader sequence. An N-methylphenylalanine modification is found at Phe7. A helical transmembrane segment spans residues 7–27 (FTLIELMIVIAIIGILAAIAL). Residues 64 to 87 (VLSEESSTSKENIGLTSSETSTKP) are disordered. A compositionally biased stretch (polar residues) spans 67-87 (EESSTSKENIGLTSSETSTKP). The cysteines at positions 137 and 156 are disulfide-linked.

Belongs to the N-Me-Phe pilin family. In terms of assembly, major component of the type IV pilus (T4P) that plays a role in surface and attachment to the host epithelial tissues.

Its subcellular location is the fimbrium. It is found in the membrane. The sequence is that of Type IV major alpha-pilin (tfpI) from Moraxella bovis.